The following is a 143-amino-acid chain: Mannitol-specific phosphotransferase enzyme IIA component (143 aa).

Residues 1 to 142 (MKLLKNNIYI…DKVLEFLAKH (142 aa)) form the PTS EIIA type-2 domain. His-61 (tele-phosphohistidine intermediate) is an active-site residue. His-61 carries the post-translational modification Phosphohistidine; by HPr.

The protein resides in the cytoplasm. The phosphoenolpyruvate-dependent sugar phosphotransferase system (sugar PTS), a major carbohydrate active transport system, catalyzes the phosphorylation of incoming sugar substrates concomitantly with their translocation across the cell membrane. The enzyme II CmtAB PTS system is involved in D-mannitol transport. In Mycoplasma pneumoniae (strain ATCC 29342 / M129 / Subtype 1) (Mycoplasmoides pneumoniae), this protein is Mannitol-specific phosphotransferase enzyme IIA component (mtlF).